The following is a 124-amino-acid chain: Aspartate 1-decarboxylase (124 aa).

The active-site Schiff-base intermediate with substrate; via pyruvic acid is serine 21. Residue serine 21 is modified to Pyruvic acid (Ser). Threonine 53 contributes to the substrate binding site. Tyrosine 54 serves as the catalytic Proton donor. A substrate-binding site is contributed by 69–71 (GAA).

Belongs to the PanD family. Heterooctamer of four alpha and four beta subunits. Requires pyruvate as cofactor. Is synthesized initially as an inactive proenzyme, which is activated by self-cleavage at a specific serine bond to produce a beta-subunit with a hydroxyl group at its C-terminus and an alpha-subunit with a pyruvoyl group at its N-terminus.

The protein resides in the cytoplasm. The catalysed reaction is L-aspartate + H(+) = beta-alanine + CO2. It functions in the pathway cofactor biosynthesis; (R)-pantothenate biosynthesis; beta-alanine from L-aspartate: step 1/1. Catalyzes the pyruvoyl-dependent decarboxylation of aspartate to produce beta-alanine. In Dehalococcoides mccartyi (strain CBDB1), this protein is Aspartate 1-decarboxylase.